The chain runs to 500 residues: MNYFPWLTIIVFLPISAGSLLFFLPHKGNKLIKWYTICICILELLLTTYAFCYHFRLDDPLIQLAEDYKWINFFDFYWRLGIDGLSIGPILLTGFITTLATLAAWPVTRDSRLFHFLMLAMYSGQIGSFSSRDLLLFFIMWEFELIPVYLLLSMWGGKKRLYSATKFILYTAGGSVFLLIGVLGLGLYGSNEPTLNFETLANQSYPVALEIIFYIGFLIAFAVKSPIIPLHTWLPDTHGEAHYSTCMLLAGILLKMGAYGLVRINMELLPHAHSIFSPWLIIVGTMQIIYAASTSLGQRNLKKRIAYSSVSHMGFIIIGIGSITDTGLNGAILQIISHGFIGAALFFLAGTSYDRMRLVYLDEMGGMAVSIPKIFTMFSILSMASLALPGMSGFVAELIVFFGIITSQKYFLMPKILITFVMAIGMILTPIYSLSMSRQMFYGYKLFNAPSSYFFDSGPRELFVSISIFLPVIGIGIYPDFVLSLSGEKVETILYNYFYR.

14 consecutive transmembrane segments (helical) span residues Phe4 to Leu24, Leu31 to Phe51, Ile87 to Val107, Leu113 to Ser130, Leu134 to Met154, Phe167 to Leu187, Ala208 to Ile228, His242 to Val262, Ala272 to Ala292, Ile305 to Asp325, Gly330 to Gly350, Leu386 to Thr406, Ile416 to Met436, and Leu462 to Val482.

Belongs to the complex I subunit 4 family.

It is found in the plastid. The protein resides in the chloroplast thylakoid membrane. It carries out the reaction a plastoquinone + NADH + (n+1) H(+)(in) = a plastoquinol + NAD(+) + n H(+)(out). The enzyme catalyses a plastoquinone + NADPH + (n+1) H(+)(in) = a plastoquinol + NADP(+) + n H(+)(out). In Gossypium barbadense (Sea Island cotton), this protein is NAD(P)H-quinone oxidoreductase chain 4, chloroplastic.